The chain runs to 331 residues: Tetraacyldisaccharide 4'-kinase (331 aa).

55 to 62 is a binding site for ATP; the sequence is SVGGNGKT.

Belongs to the LpxK family.

The enzyme catalyses a lipid A disaccharide + ATP = a lipid IVA + ADP + H(+). The protein operates within glycolipid biosynthesis; lipid IV(A) biosynthesis; lipid IV(A) from (3R)-3-hydroxytetradecanoyl-[acyl-carrier-protein] and UDP-N-acetyl-alpha-D-glucosamine: step 6/6. Its function is as follows. Transfers the gamma-phosphate of ATP to the 4'-position of a tetraacyldisaccharide 1-phosphate intermediate (termed DS-1-P) to form tetraacyldisaccharide 1,4'-bis-phosphate (lipid IVA). The chain is Tetraacyldisaccharide 4'-kinase from Aeromonas salmonicida (strain A449).